The chain runs to 419 residues: Chalcone synthase D (419 aa).

Residue Cys164 is part of the active site.

The protein belongs to the thiolase-like superfamily. Chalcone/stilbene synthases family.

The catalysed reaction is (E)-4-coumaroyl-CoA + 3 malonyl-CoA + 3 H(+) = 2',4,4',6'-tetrahydroxychalcone + 3 CO2 + 4 CoA. It participates in secondary metabolite biosynthesis; flavonoid biosynthesis. Its function is as follows. The primary product of this enzyme is 4,2',4',6'-tetrahydroxychalcone (also termed naringenin-chalcone or chalcone) which can under specific conditions spontaneously isomerize into naringenin. The sequence is that of Chalcone synthase D (CHSD) from Petunia hybrida (Petunia).